The following is a 64-amino-acid chain: H/ACA ribonucleoprotein complex subunit 3-like protein (64 aa).

Belongs to the NOP10 family. As to quaternary structure, component of the small nucleolar ribonucleoprotein particles containing H/ACA-type snoRNAs (H/ACA snoRNPs).

It is found in the nucleus. The protein localises to the nucleolus. Functionally, required for ribosome biogenesis. Part of a complex which catalyzes pseudouridylation of rRNA. This involves the isomerization of uridine such that the ribose is subsequently attached to C5, instead of the normal N1. Pseudouridine ('psi') residues may serve to stabilize the conformation of rRNAs. This Arabidopsis thaliana (Mouse-ear cress) protein is H/ACA ribonucleoprotein complex subunit 3-like protein.